The primary structure comprises 298 residues: Riboflavin transporter (298 aa).

9 helical membrane passes run 8–28, 35–55, 79–99, 101–121, 125–145, 151–171, 184–204, 211–231, and 258–278; these read LQGA…NSVA, FGLP…VVIL, VFLA…PVPI, QGIA…GLWL, VGMA…IILE, FNLA…YSLM, MVVY…LPDW, TVWL…WAIA, and WLVF…IIVL. EamA domains lie at 10–144 and 156–284; these read GALW…MIIL and LLPV…AFIT.

It belongs to the drug/metabolite transporter (DMT) superfamily. 10 TMS drug/metabolite exporter (DME) (TC 2.A.7.3) family.

Its subcellular location is the cell membrane. Functionally, transports riboflavin into the cell. In Vibrio cholerae serotype O1 (strain ATCC 39315 / El Tor Inaba N16961), this protein is Riboflavin transporter.